Here is a 476-residue protein sequence, read N- to C-terminus: uncharacterized protein (476 aa).

A run of 10 helical transmembrane segments spans residues 4–24, 81–101, 141–161, 174–194, 207–227, 233–253, 300–320, 351–371, 391–411, and 414–434; these read FFSFINSVLWGSVMIYLLFGA, ALAITAGGPGAVFWMWVAAFI, WMGVLFAVFLLIAYGIIFSGV, FDFPPLVTGIILAVFTLLAIT, FVPLMAIIWVLTSLVICVMNI, VIWSIFESAFGWQEAAGGAAG, MIGIFIDTLVICTASAMLILL, FVTLVVILFAFSSIVANYIYA, ICTFATVIGGTLLSLPLMWQL, and IIMACMAITNLTAILLLSPVV.

The protein belongs to the alanine or glycine:cation symporter (AGCS) (TC 2.A.25) family.

It is found in the cell inner membrane. This is an uncharacterized protein from Escherichia coli (strain K12).